We begin with the raw amino-acid sequence, 461 residues long: Cysteine--tRNA ligase (461 aa).

A Zn(2+)-binding site is contributed by Cys-29. The 'HIGH' region motif lies at 31 to 41 (MTVYDFCHIGH). Residues Cys-210, His-235, and Glu-239 each contribute to the Zn(2+) site. Positions 267 to 271 (KMSKS) match the 'KMSKS' region motif. Lys-270 is an ATP binding site.

The protein belongs to the class-I aminoacyl-tRNA synthetase family. Monomer. The cofactor is Zn(2+).

The protein resides in the cytoplasm. The enzyme catalyses tRNA(Cys) + L-cysteine + ATP = L-cysteinyl-tRNA(Cys) + AMP + diphosphate. This Azotobacter vinelandii (strain DJ / ATCC BAA-1303) protein is Cysteine--tRNA ligase.